Consider the following 336-residue polypeptide: Nucleoid-associated protein ECA2747 (336 aa).

Positions 317-336 are disordered; the sequence is KGTPPNLRDQLQRRTSGGKQ.

It belongs to the YejK family.

The protein resides in the cytoplasm. Its subcellular location is the nucleoid. This Pectobacterium atrosepticum (strain SCRI 1043 / ATCC BAA-672) (Erwinia carotovora subsp. atroseptica) protein is Nucleoid-associated protein ECA2747.